The chain runs to 355 residues: 3-dehydroquinate synthase (355 aa).

NAD(+)-binding positions include 71–76 (EGEERK), 105–109 (GVVGD), 129–130 (TS), lysine 142, and lysine 151. Residues glutamate 184, histidine 246, and histidine 263 each contribute to the Zn(2+) site.

Belongs to the sugar phosphate cyclases superfamily. Dehydroquinate synthase family. NAD(+) serves as cofactor. Requires Co(2+) as cofactor. The cofactor is Zn(2+).

It is found in the cytoplasm. It catalyses the reaction 7-phospho-2-dehydro-3-deoxy-D-arabino-heptonate = 3-dehydroquinate + phosphate. The protein operates within metabolic intermediate biosynthesis; chorismate biosynthesis; chorismate from D-erythrose 4-phosphate and phosphoenolpyruvate: step 2/7. Functionally, catalyzes the conversion of 3-deoxy-D-arabino-heptulosonate 7-phosphate (DAHP) to dehydroquinate (DHQ). In Streptococcus pneumoniae serotype 4 (strain ATCC BAA-334 / TIGR4), this protein is 3-dehydroquinate synthase.